Here is a 201-residue protein sequence, read N- to C-terminus: uncharacterized protein (201 aa).

Coiled coils occupy residues 3 to 43 (YMDD…EVYK) and 76 to 120 (TGQV…AKTK).

This is an uncharacterized protein from Archaeoglobus fulgidus (strain ATCC 49558 / DSM 4304 / JCM 9628 / NBRC 100126 / VC-16).